A 128-amino-acid polypeptide reads, in one-letter code: Probable 4-amino-4-deoxy-L-arabinose-phosphoundecaprenol flippase subunit ArnF (128 aa).

Residues M1–S10 lie on the Cytoplasmic side of the membrane. The chain crosses the membrane as a helical span at residues V11–L31. The Periplasmic portion of the chain corresponds to S32 to Q47. Residues L48–A68 form a helical membrane-spanning segment. Over L69–A77 the chain is Cytoplasmic. The helical transmembrane segment at Y78–F98 threads the bilayer. Over N99–P101 the chain is Periplasmic. Residues A102–I122 form a helical membrane-spanning segment. At K123–S128 the chain is on the cytoplasmic side.

Belongs to the ArnF family. In terms of assembly, heterodimer of ArnE and ArnF.

Its subcellular location is the cell inner membrane. Its pathway is bacterial outer membrane biogenesis; lipopolysaccharide biosynthesis. Its function is as follows. Translocates 4-amino-4-deoxy-L-arabinose-phosphoundecaprenol (alpha-L-Ara4N-phosphoundecaprenol) from the cytoplasmic to the periplasmic side of the inner membrane. This chain is Probable 4-amino-4-deoxy-L-arabinose-phosphoundecaprenol flippase subunit ArnF, found in Yersinia pseudotuberculosis serotype O:1b (strain IP 31758).